The primary structure comprises 856 residues: Inactive rhomboid protein 1 (856 aa).

The interval 1–20 (MSEARRDSTSSLQRKKPPWL) is disordered. The Cytoplasmic portion of the chain corresponds to 1 to 412 (MSEARRDSTS…HRPFFTYWLT (412 aa)). Phosphoserine is present on residues Ser76 and Ser176. A phosphothreonine mark is found at Thr180 and Thr183. Residue Ser391 is modified to Phosphoserine. The helical transmembrane segment at 413–433 (FVHSLVTILAVCIYGIAPVGF) threads the bilayer. The Lumenal segment spans residues 434–656 (SQHETVDSVL…NPEVPDQFYR (223 aa)). Residue Asn584 is glycosylated (N-linked (GlcNAc...) asparagine). The helical transmembrane segment at 657–677 (LWLSLFLHAGILHCLVSVCFQ) threads the bilayer. Over 678–692 (MTVLRDLEKLAGWHR) the chain is Cytoplasmic. Residues 693-713 (IAIIYLLSGVTGNLASAIFLP) traverse the membrane as a helical segment. Topologically, residues 714-715 (YR) are lumenal. The chain crosses the membrane as a helical span at residues 716-736 (AEVGPAGSQFGILACLFVELF). Residues 737 to 747 (QSWQILARPWR) are Cytoplasmic-facing. Residues 748–768 (AFFKLLAVVLFLFAFGLLPWI) form a helical membrane-spanning segment. Residues 769 to 773 (DNFAH) lie on the Lumenal side of the membrane. Residues 774-794 (ISGFVSGLFLSFAFLPYISFG) traverse the membrane as a helical segment. The Cytoplasmic portion of the chain corresponds to 795-804 (KFDLYRKRCQ). The chain crosses the membrane as a helical span at residues 805–825 (IIIFQAVFLGLLAGLVVLFYF). Over 826–856 (YPVRCEWCEFLTCIPFTDKFCEKYELDAQLH) the chain is Lumenal.

The protein belongs to the peptidase S54 family. In terms of assembly, homodimer, or homooligomer. Interacts with TGFA and HBEGF. Interacts with EGF; may retain EGF in the endoplasmic reticulum and regulates its degradation through the endoplasmic reticulum-associated degradation (ERAD). Interacts (via cytoplasmic N-terminus) with FRMD8/iTAP; this interaction leads to mutual protein stabilization. Interacts with ADAM17/TACE.

The protein resides in the endoplasmic reticulum membrane. It is found in the golgi apparatus membrane. Functionally, regulates ADAM17 protease, a sheddase of the epidermal growth factor (EGF) receptor ligands and TNF, thereby plays a role in sleep, cell survival, proliferation, migration and inflammation. Does not exhibit any protease activity on its own. In Rattus norvegicus (Rat), this protein is Inactive rhomboid protein 1 (Rhbdf1).